Here is a 550-residue protein sequence, read N- to C-terminus: Membrane protein insertase YidC (550 aa).

The chain crosses the membrane as a helical span at residues Asn-6–Asp-26. 2 disordered regions span residues Ala-28–Ala-54 and Gln-111–Tyr-132. Over residues Lys-30 to Val-52 the composition is skewed to low complexity. The span at Gln-111 to Lys-127 shows a compositional bias: polar residues. The next 4 membrane-spanning stretches (helical) occupy residues Lys-346–Val-366, Leu-421–Leu-441, Leu-459–Ile-479, and Pro-500–Val-520.

It belongs to the OXA1/ALB3/YidC family. Type 1 subfamily. As to quaternary structure, interacts with the Sec translocase complex via SecD. Specifically interacts with transmembrane segments of nascent integral membrane proteins during membrane integration.

It is found in the cell inner membrane. In terms of biological role, required for the insertion and/or proper folding and/or complex formation of integral membrane proteins into the membrane. Involved in integration of membrane proteins that insert both dependently and independently of the Sec translocase complex, as well as at least some lipoproteins. Aids folding of multispanning membrane proteins. This Cronobacter sakazakii (strain ATCC BAA-894) (Enterobacter sakazakii) protein is Membrane protein insertase YidC.